An 84-amino-acid polypeptide reads, in one-letter code: Putative lipoprotein RzoQ (84 aa).

Positions 1-22 (MRNRNLLKFLPGLLICLIVLTS) are cleaved as a signal peptide. The N-palmitoyl cysteine moiety is linked to residue Cys-23. A lipid anchor (S-diacylglycerol cysteine) is attached at Cys-23.

The protein localises to the cell membrane. The chain is Putative lipoprotein RzoQ (rzoQ) from Escherichia coli (strain K12).